The following is a 2072-amino-acid chain: MGNKLSCSCAPLMRKAYRYEDSPWQSSRRRDGHLLSSFRLWAEVFHVSASGAGTVKWQQVSEDLVPVNITCIQDSPECIFHITAYNSQVDKILDVRLVQPGTRIGQASECFVYWKDPMTNDTWGLNFTSPIDAKQFRECCSPSFKFSRKASSSYSLKLDPPGKGKVKAKRKPLSTPASPSRVRQEPQCTCMSAEQYARLRTDPRVRGSSTLPRNVGSHRITDVDGQQQVGSGKVVSAVSSTSLYDNVASGGPGTNQGADTLPRQMKGGQQDRQDVANSGVNTNTPGVIVTGVGNVGSDMCGQNHVGSQVGNDDPAACQMDMDLSKSEGTQAGGGLHQSVGTCTSSSKGTGTRNKDFGDDMTRDAHSHDMHQHNVINNNTRRKTKSTEDMNVDTSTLKRMLKPMPSTESPVTSPEMGRRRYNYYNANAAQTLGHPPHMHQHGMAMGMGGGGGGGHHIMNNNTMGRASSQSSRFSGSRSSHEIGRGYPPRNLYLELERERSCIEGSPPSDNVMFDNQCYATTPSSSNGNSDQDQSYGQQQSSGQHPQQQQGPPQRSSRHQHHHQQAPNVTPTPGSPTSRLLLEYEMHLRNTLAKGMDAESYSLHTFEALLSQSMENLANAKSSTLPLPPHRPLSTIRDKERDRDRDGYYSDRNELIRERERERDRGYLSDHNSSFSNSRCASCIGESARAQWFRHSDGWRSGSSTIGSGSGHGMMTQQIPGSGHKRSPWDSLPSLRQDSSLNDSGYKSARADSLEQRAEFIRQDSLRSEYLSDRESRYGIVQQASIESTDSRMCYLTSSEISDDDRMSLTTAVSDEDDGESVMASPYKAKATGTAASSFNCTGAVRKAGFLSVKKWLLRKKHQIELARKRGWKGYWVCLKGTTLLFYPCDSREGRSVEAAPKHLIIVDGAIMQPIPEHPKRDYIFCLSTAFGDAYLFQAPCQVELENWVNSIHSACAAAFARHRGKTGTLHLLQEEIFRLEKAIESDHKLKHMAELQQSVVTDQETRHQIQTQILQWEENLERLHCEQFRLRCYMASLQSGELPNPKSLLTHVSRPTKNTLNKLGVFTVSSFHAFICARSPSLLNNLLAGRGATKRRPPMLSRSNSGSSRRSMQMNSRDEPEKTFKVAMPDNAYSTVYLRDAMSVEEFLASACARRNLNPMEHFVRVKKRRDMEDHNYFVPHRNDLIENYLHNHEFVEVCMKILYQVELQRTTLEQMWGFSVEAELIENAERQDELCCYVSRVEDKSVAMHNGIIKGDEIMVINGAIVSDLDMMYLESVLQEEQSLSMMMRSSRTEPPDLVGIMRVTDDMIDSLVCPPPPTDPPVMSEEMITGLIVPAPGWNGTSKDLYSPEAESSPATSFVDPAAMAAQLAVGGVGGVVVGGLGVAKPTSRTSSFEIENLLKTAEQETRKSSPTGSVTSSVSTTALTPSRQLTDAEKLRKVVMELVDTERTYVKHLNNLLEHYLEPMKRETFLSNAEINALFGNIHEIVTFQRQFLQNLEESLDLEPDFNKFEHCGQFRNVLFAIGSAFLYYVNHFKLYSSFCASHSKAQKVLHPNEGNHALQEFLAARNPKQQHSSTLESYLIKPIQRILKYPLLLQQMRNLTDTRADEHVHLCEALKGMEKVAEHINEMQRIHEEYGAIFDHLFRQHQKSCKQPIDLSPGDLLYYGGVEWLNISDFLGKIKKGLELHAMCFVFKSAVVFLCKERLRQKKKLMGVSSKNATNEVEIIRYQVLIPVTEVQVRASSAKDMDSHFLWELIHLRSQLQRRSEKVYVLSNSTADFRNAFLKTIRQIIRESVRNMSIPMKNFGGSSGSVSGHSSQGMGSMGYPGNSQTLERPKQQITIVHGSHTLGKPKKKSGSQRHSAGNIDYDNLSGSQEADDLPPSVGVVHYASGHTHGQQMQPAGFRGRSKTVGDVTEITCSSPEPHQQQQQQQQQQQQLMQQGHAHAHPHPHPHPREPPPPPIRQPHLHHHSSDIERIDPGTKSEGEEDSQQGTIRPKATLGRTPNHLTLSTTSTLSVGSTGSQARLIQSSHPPASYQPVLMKDLGSPVWKPRDMINLGTDPQSTTRKDDVKN.

Gly-2 is lipidated: N-myristoyl glycine. The 119-residue stretch at 29–147 (RRDGHLLSSF…ECCSPSFKFS (119 aa)) folds into the WH1 domain. Disordered stretches follow at residues 153–188 (SYSL…EPQC), 245–284 (DNVA…NTNT), 327–355 (EGTQ…RNKD), 459–486 (NNTM…RGYP), 502–576 (EGSP…SPTS), 618–655 (AKSS…ELIR), and 699–747 (SGSS…YKSA). Over residues 275–284 (VANSGVNTNT) the composition is skewed to polar residues. Composition is skewed to low complexity over residues 338–351 (SVGT…GTGT), 459–476 (NNTM…SGSR), and 522–553 (SSSN…PPQR). Residues 564-576 (APNVTPTPGSPTS) are compositionally biased toward polar residues. Basic and acidic residues predominate over residues 634 to 655 (IRDKERDRDRDGYYSDRNELIR). Residues 732-743 (SLRQDSSLNDSG) show a composition bias toward polar residues. Positions 840 to 958 (TGAVRKAGFL…SIHSACAAAF (119 aa)) constitute a PH domain. The tract at residues 1088–1119 (GRGATKRRPPMLSRSNSGSSRRSMQMNSRDEP) is disordered. Residues 1100–1114 (SRSNSGSSRRSMQMN) show a composition bias toward low complexity. The region spanning 1121-1188 (KTFKVAMPDN…PHRNDLIENY (68 aa)) is the RBD domain. The PDZ domain maps to 1204–1293 (QVELQRTTLE…LSMMMRSSRT (90 aa)). The tract at residues 1403 to 1424 (AEQETRKSSPTGSVTSSVSTTA) is disordered. The segment covering 1410–1424 (SSPTGSVTSSVSTTA) has biased composition (low complexity). Positions 1436–1630 (KLRKVVMELV…EKVAEHINEM (195 aa)) constitute a DH domain. Disordered regions lie at residues 1803–1832 (MKNF…NSQT), 1844–2039 (HGSH…YQPV), and 2051–2072 (PRDM…DVKN). 2 stretches are compositionally biased toward low complexity: residues 1811–1821 (GSVSGHSSQGM) and 1926–1943 (QQQQ…QQGH). Over residues 1970–1984 (HSSDIERIDPGTKSE) the composition is skewed to basic and acidic residues. Low complexity predominate over residues 2007-2022 (LTLSTTSTLSVGSTGS). A compositionally biased stretch (polar residues) spans 2023-2032 (QARLIQSSHP).

Expressed in both larval and adult brains, mainly in a subset of neurons but not in glia. In the adult eye is expressed in the two primary pigment cells in the subapical region of the eye. Also present in photoreceptors.

Its subcellular location is the synapse. In terms of biological role, regulates synaptic differentiation through the organization of actin cytoskeleton possibly by activating Rho-like GTPases. Is likely a factor in the cascade of Rac1 or Cdc42 in the neurons. May play a role in maintaining proper septate junction functions. Required for eye development and most likely affects corneal lens-formation. This chain is Protein still life, isoform SIF type 1 (sif), found in Drosophila melanogaster (Fruit fly).